The following is a 342-amino-acid chain: P2Y purinoceptor 12 (342 aa).

Topologically, residues 1 to 27 (MQAIDNLTSAPGNTSLCTRDYKITQVL) are extracellular. Residues Asn6 and Asn13 are each glycosylated (N-linked (GlcNAc...) asparagine). Disulfide bonds link Cys17-Cys270 and Cys97-Cys175. Residues 28-50 (FPLLYTVLFFVGLITNSLAMRIF) form a helical membrane-spanning segment. Residues 51-61 (FQIRSKSNFII) are Cytoplasmic-facing. Residues Ser55 and Ser57 each carry the phosphoserine modification. The helical transmembrane segment at 62-82 (FLKNTVISDLLMILTFPFKIL) threads the bilayer. The Extracellular segment spans residues 83-97 (SDAKLGAGPLRTFVC). ADP-binding residues include Arg93, Cys97, and Tyr105. The chain crosses the membrane as a helical span at residues 98–118 (QVTSVIFYFTMYISISFLGLI). At 119 to 142 (TIDRYQKTTRPFKTSNPKNLLGAK) the chain is on the cytoplasmic side. Residues 143–162 (ILSVLIWAFMFLLSLPNMIL) traverse the membrane as a helical segment. Residues 156–159 (SLPN), 175–179 (CSFLK), His187, and Asn191 each bind ADP. Residues 163–185 (TNRRPRDKNVKKCSFLKSEFGLV) are Extracellular-facing. Residues 186–207 (WHEIVNYICQVIFWINFLIVIV) traverse the membrane as a helical segment. The Cytoplasmic portion of the chain corresponds to 208 to 233 (CYTLITKELYRSYVRTRGVGKVPRKK). The chain crosses the membrane as a helical span at residues 234-259 (VNVKVFIIIAVFFICFVPFHFARIPY). Residues 256–259 (RIPY), Gln263, and Lys280 each bind ADP. Over 260 to 278 (TLSQTRDVFDCAAENTLFY) the chain is Extracellular. A helical transmembrane segment spans residues 279 to 298 (VKESTLWLTSLNACLDPFIY). Over 299–342 (FFLCKSFRNSLISMLKCPNSATSQSQDNRKKEQDGGDPNEETPM) the chain is Cytoplasmic. The tract at residues 317 to 342 (NSATSQSQDNRKKEQDGGDPNEETPM) is disordered. Positions 333–342 (GGDPNEETPM) are enriched in acidic residues.

This sequence belongs to the G-protein coupled receptor 1 family.

It is found in the cell membrane. Receptor for ADP and ATP coupled to G-proteins that inhibit the adenylyl cyclase second messenger system. Required for normal platelet aggregation and blood coagulation. This Macaca fascicularis (Crab-eating macaque) protein is P2Y purinoceptor 12 (P2RY12).